A 153-amino-acid polypeptide reads, in one-letter code: L-alanine exporter AlaE (153 aa).

The next 4 membrane-spanning stretches (helical) occupy residues 16-36 (VAMV…LSEM), 42-62 (LSSR…YGLY), 86-106 (LFAY…AIGA), and 114-134 (AVGS…YFLE).

This sequence belongs to the AlaE exporter family.

The protein resides in the cell inner membrane. In terms of biological role, exports L-alanine. In Musicola paradisiaca (strain Ech703) (Dickeya paradisiaca), this protein is L-alanine exporter AlaE.